A 1422-amino-acid polypeptide reads, in one-letter code: DNA-directed RNA polymerase subunit beta (1422 aa).

Residues 1392–1422 form a disordered region; it reads QAAREAAERDLGGGPLGAPRGAVASGEKSSA.

It belongs to the RNA polymerase beta chain family. In terms of assembly, the RNAP catalytic core consists of 2 alpha, 1 beta, 1 beta' and 1 omega subunit. When a sigma factor is associated with the core the holoenzyme is formed, which can initiate transcription.

The catalysed reaction is RNA(n) + a ribonucleoside 5'-triphosphate = RNA(n+1) + diphosphate. Functionally, DNA-dependent RNA polymerase catalyzes the transcription of DNA into RNA using the four ribonucleoside triphosphates as substrates. In Anaeromyxobacter dehalogenans (strain 2CP-1 / ATCC BAA-258), this protein is DNA-directed RNA polymerase subunit beta.